Reading from the N-terminus, the 1267-residue chain is Eukaryotic translation initiation factor 3 subunit A (1267 aa).

Residues 82–118 (NIKSLEDVVRAYLKLAEEKTETAKEESQQMVLDIEDL) adopt a coiled-coil conformation. The PCI domain occupies 315–498 (MQRMSTRVLL…RTLSFGSDLN (184 aa)). 3 stretches are compositionally biased toward basic and acidic residues: residues 792-835 (EERK…LEQE), 844-1086 (YQER…DSRP), and 1098-1147 (WRER…EGSA). Residues 792-1267 (EERKKQRKED…DDDGWTTVRR (476 aa)) are disordered. 3 consecutive repeat copies span residues 956–965 (DDDRGPRRGG), 966–975 (DDERPPRRGF), and 976–985 (DDDRGTRRGF). Positions 956-1073 (DDDRGPRRGG…DDERGGRRGM (118 aa)) are 12 X 10 AA approximate tandem repeats of D-[DE]-[DE]-R-[GP]-[GPQT]-R-R-[GPS]-[ADFGIM]. Residues 986–994 (DDDRGQRRG) form a 4; truncated repeat. Tandem repeats lie at residues 995–1004 (DDDRGPRRGM) and 1005–1014 (DDDRGPRRPI). One copy of the 7; truncated repeat lies at 1015-1023 (DDDRGPRRS). 2 repeat units span residues 1024–1033 (DDDRGPRRGF) and 1034–1043 (DDDRGPRRGM). Residues 1044 to 1053 (DEPRGPRRGA) form a 10; approximate repeat. Residues 1054 to 1063 (DDDWGPRRGG) form repeat 11. Residues 1064-1073 (DDERGGRRGM) form a 12; approximate repeat. Gly residues predominate over residues 1150–1159 (RGGGGGGGGE). Over residues 1162–1256 (SSWRDSRRED…KENPRRTKNE (95 aa)) the composition is skewed to basic and acidic residues.

It belongs to the eIF-3 subunit A family. As to quaternary structure, component of the eukaryotic translation initiation factor 3 (eIF-3) complex, which is composed of 13 subunits: eif3a, eif3b, eif3c, eif3d, eif3e, eif3f, eif3g, eif3h, eif3i, eif3j, eif3k, eif3l and eif3m.

It is found in the cytoplasm. In terms of biological role, RNA-binding component of the eukaryotic translation initiation factor 3 (eIF-3) complex, which is involved in protein synthesis of a specialized repertoire of mRNAs and, together with other initiation factors, stimulates binding of mRNA and methionyl-tRNAi to the 40S ribosome. The eIF-3 complex specifically targets and initiates translation of a subset of mRNAs involved in cell proliferation. The chain is Eukaryotic translation initiation factor 3 subunit A (eif3a) from Danio rerio (Zebrafish).